Reading from the N-terminus, the 240-residue chain is Insulin-like growth factor-binding protein 3 receptor (240 aa).

Residues 1–38 (MGNCQAGHNLHLCLAHHPPLVCATLILLLLGLSGLGLG) form the signal peptide. The Extracellular portion of the chain corresponds to 39-204 (SFLLTHRTGL…SEELALCGSR (166 aa)). N-linked (GlcNAc...) asparagine glycosylation is found at N73, N101, and N167. The chain crosses the membrane as a helical span at residues 205–225 (LLVLGSFLLLFCGLLCCVTAM). Topologically, residues 226–240 (CFHPRRESHWSRTRL) are cytoplasmic.

Interacts with IGFBP3. Interacts with CASP8. Widely expressed in normal tissues but suppressed in prostate and breast tumor.

It localises to the cell membrane. Cell death receptor specific for IGFBP3, may mediate caspase-8-dependent apoptosis upon ligand binding. This chain is Insulin-like growth factor-binding protein 3 receptor (TMEM219), found in Homo sapiens (Human).